Reading from the N-terminus, the 833-residue chain is Lon protease (833 aa).

One can recognise a Lon N-terminal domain in the interval 3–198; the sequence is YPFMATRGVI…LIFSFLVELK (196 aa). Position 390–397 (390–397) interacts with ATP; that stretch reads GPPGTGKT. A Lon proteolytic domain is found at 627–808; it reads YERIGAVNGL…DEIFENLFGK (182 aa). Catalysis depends on residues serine 714 and lysine 757.

The protein belongs to the peptidase S16 family. In terms of assembly, homohexamer. Organized in a ring with a central cavity.

The protein localises to the cytoplasm. It catalyses the reaction Hydrolysis of proteins in presence of ATP.. Functionally, ATP-dependent serine protease that mediates the selective degradation of mutant and abnormal proteins as well as certain short-lived regulatory proteins. Required for cellular homeostasis and for survival from DNA damage and developmental changes induced by stress. Degrades polypeptides processively to yield small peptide fragments that are 5 to 10 amino acids long. Binds to DNA in a double-stranded, site-specific manner. In Mycoplasma mobile (strain ATCC 43663 / 163K / NCTC 11711) (Mesomycoplasma mobile), this protein is Lon protease.